Here is a 231-residue protein sequence, read N- to C-terminus: Tegument protein UL51 homolog (231 aa).

The S-palmitoyl cysteine; by host moiety is linked to residue C12.

It belongs to the herpesviridae UL51 family. In terms of assembly, oligomerizes. Interacts with U75; this interaction mediates U75 incorporation to virions. Phosphorylated. In terms of processing, palmitoylation is necessary for Golgi localization.

The protein localises to the virion tegument. The protein resides in the host cytoplasm. Its subcellular location is the host Golgi apparatus. Functionally, plays several roles during the time course of infection, including egress of virus particles from the perinuclear space and secondary envelopment of cytoplasmic capsids that bud into specific trans-Golgi network (TGN)-derived membranes. In Human herpesvirus 6B (strain Z29) (HHV-6 variant B), this protein is Tegument protein UL51 homolog (U44).